Reading from the N-terminus, the 392-residue chain is Gastricsin (392 aa).

Residues 1–16 (MKWMVVALLCLPLLEA) form the signal peptide. The propeptide at 17–62 (SLLRVPLRKMKSIRETMKEQGVLKDFLKTHKYDPGQKYHFGNFGDY) is activation peptide. Positions 76-389 (YFGEISIGTP…DMGNNKVGLA (314 aa)) constitute a Peptidase A1 domain. Asp94 is a catalytic residue. Intrachain disulfides connect Cys107-Cys112 and Cys270-Cys275. Asp280 is an active-site residue. A disulfide bridge connects residues Cys314 and Cys347.

The protein belongs to the peptidase A1 family.

Its subcellular location is the secreted. The enzyme catalyses More restricted specificity than pepsin A, but shows preferential cleavage at Tyr-|-Xaa bonds. High activity on hemoglobin.. Hydrolyzes a variety of proteins. The protein is Gastricsin (Pgc) of Rattus norvegicus (Rat).